The following is a 263-amino-acid chain: MPFITKISTQKKNTERFNIFLDEKYAFSVDADVLVRFDLKKGKELDELDILEIQYGDDVKKAFNRAVEFLSYRMRSEKEVRDHLKKKETPDMVISEVIHKLYDYRYLNDKEFAEAYASTHKKTNGKGPDVLFRELKAKGIDDDTIKETLSAFTFDEQIQEALKHIGKILKKDKKLSTKEIRQRAQMQLQRKGFPFDVINAALEQTEYENDDEAEMEALKAHAEKAIRKYRYDGSYESGMKVKQYLFRKGFSIDDIDQFLQEEE.

It belongs to the RecX family.

The protein resides in the cytoplasm. Modulates RecA activity. In Bacillus velezensis (strain DSM 23117 / BGSC 10A6 / LMG 26770 / FZB42) (Bacillus amyloliquefaciens subsp. plantarum), this protein is Regulatory protein RecX.